Consider the following 70-residue polypeptide: DNA-directed RNA polymerase subunit omega (70 aa).

This sequence belongs to the RNA polymerase subunit omega family. In terms of assembly, the RNAP catalytic core consists of 2 alpha, 1 beta, 1 beta' and 1 omega subunit. When a sigma factor is associated with the core the holoenzyme is formed, which can initiate transcription.

It catalyses the reaction RNA(n) + a ribonucleoside 5'-triphosphate = RNA(n+1) + diphosphate. Its function is as follows. Promotes RNA polymerase assembly. Latches the N- and C-terminal regions of the beta' subunit thereby facilitating its interaction with the beta and alpha subunits. In Bacillus anthracis, this protein is DNA-directed RNA polymerase subunit omega.